Consider the following 490-residue polypeptide: Bifunctional IPC transferase and DIPP synthase (490 aa).

The mobA-like NTP transferase stretch occupies residues 72–290; it reads LMKAVILAAG…RANRALVSAA (219 aa). Residues 78–80, Lys91, Asp144, and Glu180 each bind CTP; that span reads LAA. Glu180 lines the Mg(2+) pocket. The CDP-alcohol phosphatidyltransferases stretch occupies residues 291–490; that stretch reads VKGSGDGFIS…VTLLAVLVSK (200 aa). Helical transmembrane passes span 329 to 349, 389 to 409, 447 to 467, and 468 to 488; these read FLVG…AGLL, FLAI…FAIF, IFLI…IFWM, and FLFV…AVLV.

In the N-terminal section; belongs to the MobA family. The protein in the C-terminal section; belongs to the CDP-alcohol phosphatidyltransferase class-I family. In terms of assembly, forms a mixture of monomers and dimers in solution, with prevalence of the monomeric form. The cofactor is Mg(2+).

The protein localises to the membrane. It catalyses the reaction 1D-myo-inositol 3-phosphate + CTP + H(+) = CDP-1L-myo-inositol + diphosphate. The catalysed reaction is CDP-1L-myo-inositol + 1D-myo-inositol 3-phosphate = bis(1L-myo-inositol) 3,1'-phosphate 1-phosphate + CMP + H(+). Functionally, involved in biosynthesis of di-myo-inositol phosphate (DIP), a widespread organic solute in microorganisms adapted to hot environments. Catalyzes the condensation of CTP and L-myo-inositol-1-phosphate into CDP-L-myo-inositol, as well as the biosynthesis of di-myo-inositol-1,3'-phosphate-1'-phosphate (DIPP) from CDP-L-myo-inositol and L-myo-inositol-1-phosphate. The cytidylyltransferase is absolutely specific for CTP and L-myo-inositol-1-P. The DIPP synthase uses only L-myoinositol-1-phosphate as an alcohol acceptor, but CDP-glycerol, as well as CDP-L-myo-inositol and CDP-D-myoinositol, are recognized as alcohol donors. In Archaeoglobus fulgidus (strain ATCC 49558 / DSM 4304 / JCM 9628 / NBRC 100126 / VC-16), this protein is Bifunctional IPC transferase and DIPP synthase.